The following is an 83-amino-acid chain: Short neurotoxin 1 (83 aa).

The first 21 residues, 1 to 21, serve as a signal peptide directing secretion; sequence MKTLLLTLVVVTIVCLDLGYT. 4 disulfide bridges follow: Cys-24–Cys-45, Cys-38–Cys-62, Cys-64–Cys-75, and Cys-76–Cys-81.

The protein belongs to the three-finger toxin family. Short-chain subfamily. Type I alpha-neurotoxin sub-subfamily. In terms of tissue distribution, expressed by the venom gland.

The protein resides in the secreted. Functionally, binds to muscle nicotinic acetylcholine receptor (nAChR) and inhibit acetylcholine from binding to the receptor, thereby impairing neuromuscular transmission. This Oxyuranus scutellatus scutellatus (Australian taipan) protein is Short neurotoxin 1.